A 360-amino-acid polypeptide reads, in one-letter code: 3-dehydroquinate synthase (360 aa).

Residues 72–77 (DGEEYK), 106–110 (GVIGD), 130–131 (TT), Lys143, and Lys152 each bind NAD(+). Zn(2+)-binding residues include Glu185, His248, and His265.

The protein belongs to the sugar phosphate cyclases superfamily. Dehydroquinate synthase family. Co(2+) serves as cofactor. It depends on Zn(2+) as a cofactor. NAD(+) is required as a cofactor.

The protein localises to the cytoplasm. The catalysed reaction is 7-phospho-2-dehydro-3-deoxy-D-arabino-heptonate = 3-dehydroquinate + phosphate. It participates in metabolic intermediate biosynthesis; chorismate biosynthesis; chorismate from D-erythrose 4-phosphate and phosphoenolpyruvate: step 2/7. In terms of biological role, catalyzes the conversion of 3-deoxy-D-arabino-heptulosonate 7-phosphate (DAHP) to dehydroquinate (DHQ). The chain is 3-dehydroquinate synthase from Geotalea uraniireducens (strain Rf4) (Geobacter uraniireducens).